Here is a 177-residue protein sequence, read N- to C-terminus: MSRIGKKPVPVPAGVTASVEGQTVKAKGAKGELSFVVHDEVLVKMEDGAVRVDPRDQSKEARSKWGMSRTMISNIFVGVKDGFEKKLEISGVGYRAAMQGKNLQLSLGFSHEVVYDVPAGITVAVPKPTEIVVTGIDKQQVGQVAAEIREYRGPEPYKGKGVKYAGEKIVRKEGKKK.

This sequence belongs to the universal ribosomal protein uL6 family. In terms of assembly, part of the 50S ribosomal subunit.

Functionally, this protein binds to the 23S rRNA, and is important in its secondary structure. It is located near the subunit interface in the base of the L7/L12 stalk, and near the tRNA binding site of the peptidyltransferase center. The chain is Large ribosomal subunit protein uL6 from Brucella canis (strain ATCC 23365 / NCTC 10854 / RM-666).